Reading from the N-terminus, the 35-residue chain is Kappa-stichotoxin-She3a (35 aa).

The ShKT domain maps to cysteine 3–cysteine 35. 3 disulfides stabilise this stretch: cysteine 3–cysteine 35, cysteine 12–cysteine 28, and cysteine 17–cysteine 32.

This sequence belongs to the sea anemone type 1 potassium channel toxin family. Type 1a subfamily.

It localises to the secreted. It is found in the nematocyst. Its function is as follows. Peptide with both antimicrobial and neurotoxin activities. Inhibits voltage-dependent potassium channels. Potently blocks Kv1.1/KCNA1 (IC(50)=6.7-87 pM) and Kv1.3/KCNA3 (IC(50)=10-250 pM). Less potently blocks Kv1.4/KCNA4 (IC(50)=0.31 nM), and Kv1.6/KCNA6 (IC(50)=0.16 nM). Shows moderate activity on Kv1.2/KCNA2 (IC(50)=9 nM), Kv1.7/KCNA7 (IC(50)=11.5 nM), and KCa3.1/KCNN4 (Kd=0.03-30 nM). Blocks Kv channels by binding to a shallow vestibule at the outer entrance to the ion conduction pathway and occluding the entrance to the pore. Shows antibacterial activity against all tested bacteria (the Gram-positive bacteria B.subtilis and S.aureus, and the Gram-negative bacteria S.typhimurium and P.aeruginosa). The sequence is that of Kappa-stichotoxin-She3a from Stichodactyla helianthus (Sun anemone).